Here is a 338-residue protein sequence, read N- to C-terminus: Heat-inducible transcription repressor HrcA (338 aa).

Belongs to the HrcA family.

In terms of biological role, negative regulator of class I heat shock genes (grpE-dnaK-dnaJ and groELS operons). Prevents heat-shock induction of these operons. The sequence is that of Heat-inducible transcription repressor HrcA from Thermotoga petrophila (strain ATCC BAA-488 / DSM 13995 / JCM 10881 / RKU-1).